Here is a 134-residue protein sequence, read N- to C-terminus: Large ribosomal subunit protein eL32 (134 aa).

This sequence belongs to the eukaryotic ribosomal protein eL32 family.

The chain is Large ribosomal subunit protein eL32 (RpL32) from Drosophila bifasciata (Fruit fly).